The sequence spans 183 residues: uncharacterized protein (183 aa).

It belongs to the chlamydial CPn_0803/CT_584/TC_0873 family.

This is an uncharacterized protein from Chlamydia muridarum (strain MoPn / Nigg).